The primary structure comprises 194 residues: Peptidyl-tRNA hydrolase (194 aa).

Y16 is a tRNA binding site. H21 acts as the Proton acceptor in catalysis. Residues F67, N69, and N115 each contribute to the tRNA site.

The protein belongs to the PTH family. In terms of assembly, monomer.

Its subcellular location is the cytoplasm. It carries out the reaction an N-acyl-L-alpha-aminoacyl-tRNA + H2O = an N-acyl-L-amino acid + a tRNA + H(+). Its function is as follows. Hydrolyzes ribosome-free peptidyl-tRNAs (with 1 or more amino acids incorporated), which drop off the ribosome during protein synthesis, or as a result of ribosome stalling. Functionally, catalyzes the release of premature peptidyl moieties from peptidyl-tRNA molecules trapped in stalled 50S ribosomal subunits, and thus maintains levels of free tRNAs and 50S ribosomes. This chain is Peptidyl-tRNA hydrolase, found in Shigella boydii serotype 4 (strain Sb227).